We begin with the raw amino-acid sequence, 1091 residues long: Rho GTPase-activating protein 7 (1091 aa).

The SAM domain occupies 11–78 (LTQIEAKEAC…LNKCAVMKLE (68 aa)). Phosphoserine is present on residues Ser-86, Ser-89, and Ser-129. 4 disordered regions span residues 120-181 (SPKQ…TTPR), 296-329 (RSVS…TRSL), 402-439 (RTGS…SSRM), and 491-552 (SDEG…SGVG). Polar residues predominate over residues 130–143 (PDNSRLQSATSRES). Composition is skewed to low complexity over residues 155–166 (SSIRSLSSTSSS) and 298–324 (VSNS…SPVT). The interval 274 to 447 (QLNCVEISAL…RMSIYDNVPG (174 aa)) is focal adhesion-targeting (FAT). The residue at position 321 (Ser-321) is a Phosphoserine. Residues 414–425 (LRRENSSDSPKE) show a composition bias toward basic and acidic residues. The segment covering 499-511 (ALDSVSPCPSSPK) has biased composition (polar residues). The span at 513–525 (IHLDVDHDRRTPS) shows a compositional bias: basic and acidic residues. Over residues 526–535 (DLDSTGNSLN) the composition is skewed to polar residues. The polybasic cluster (PBR) stretch occupies residues 614 to 636 (KHGFSWAVPKFMKRIKVPDYKDR). Residues 641 to 847 (VPLTVNVQRS…HMIAECKKLF (207 aa)) form the Rho-GAP domain. Positions 877-1084 (SNDQPADYRH…RDSFSNQSTE (208 aa)) constitute an START domain.

In terms of assembly, interacts with EF1A1, facilitates EF1A1 distribution to the membrane periphery and ruffles upon growth factor stimulation and suppresses cell migration. Interacts with tensin TNS1 (via N-terminus); the interaction is decreased by phosphorylation of TNS1. Interacts with TNS3 and PTEN; in resting cells, interacts with TNS3 (via C2 tensin-type domain) but, following growth factor stimulation, TNS3 and PTEN are phosphorylated which leads to weakened interaction with TNS3 and enhanced interaction with PTEN. Interacts (via C-terminus) with tensin TNS4 (via SH2 domain); the interaction is independent of tyrosine phosphorylation of DLC1.

The protein localises to the cytoplasm. Its subcellular location is the cell junction. It is found in the focal adhesion. It localises to the membrane. In terms of biological role, functions as a GTPase-activating protein for the small GTPases RHOA, RHOB, RHOC and CDC42, terminating their downstream signaling. This induces morphological changes and detachment through cytoskeletal reorganization, playing a critical role in biological processes such as cell migration and proliferation. Also functions in vivo as an activator of the phospholipase PLCD1. Active DLC1 increases cell migration velocity but reduces directionality. Required for growth factor-induced epithelial cell migration; in resting cells, interacts with TNS3 while PTEN interacts with the p85 regulatory subunit of the PI3K kinase complex but growth factor stimulation induces phosphorylation of TNS3 and PTEN, causing them to change their binding preference so that PTEN interacts with DLC1 and TNS3 interacts with p85. The PTEN-DLC1 complex translocates to the posterior of migrating cells to activate RHOA while the TNS3-p85 complex translocates to the leading edge of migrating cells to promote RAC1 activation. This chain is Rho GTPase-activating protein 7 (Dlc1), found in Rattus norvegicus (Rat).